Reading from the N-terminus, the 1921-residue chain is Endoribonuclease Dicer (1921 aa).

The Helicase ATP-binding domain maps to Leu51–Glu227. Leu64–Thr71 is a binding site for ATP. The short motif at Asp175–His178 is the DECH box element. Residues Tyr409 to Asn433 are disordered. A compositionally biased stretch (acidic residues) spans Asp414–Glu425. Residues Asn433–Glu602 enclose the Helicase C-terminal domain. The 93-residue stretch at Ala630–Tyr722 folds into the Dicer dsRNA-binding fold domain. The disordered stretch occupies residues Asp727 to Arg746. Residues Lys895–Pro1042 enclose the PAZ domain. Positions Asn1270 to Lys1289 are disordered. RNase III domains lie at Asp1277–Thr1404 and Phe1665–Gly1823. 4 residues coordinate Mg(2+): Glu1317, Asp1396, Glu1399, and Glu1704. The disordered stretch occupies residues Gln1782–Ile1801. Residues Asp1809 and Glu1812 each coordinate Mg(2+). A DRBM domain is found at Val1848–Ala1913.

It belongs to the helicase family. Dicer subfamily. As to quaternary structure, component of the RISC loading complex (RLC), or micro-RNA (miRNA) loading complex (miRLC), which is composed of DICER1, AGO2 and TARBP2; DICER1 and TARBP2 are required to process precursor miRNAs (pre-miRNAs) to mature miRNAs and then load them onto AGO2. Note that the trimeric RLC/miRLC is also referred to as RISC. Mg(2+) serves as cofactor. The cofactor is Mn(2+).

The protein resides in the cytoplasm. The catalysed reaction is Endonucleolytic cleavage to 5'-phosphomonoester.. Double-stranded RNA (dsRNA) endoribonuclease playing a central role in short dsRNA-mediated post-transcriptional gene silencing. Cleaves naturally occurring long dsRNAs and short hairpin pre-microRNAs (miRNA) into fragments of twenty-one to twenty-three nucleotides with 3' overhang of two nucleotides, producing respectively short interfering RNAs (siRNA) and mature microRNAs. SiRNAs and miRNAs serve as guide to direct the RNA-induced silencing complex (RISC) to complementary RNAs to degrade them or prevent their translation. Gene silencing mediated by siRNAs, also called RNA interference, controls the elimination of transcripts from mobile and repetitive DNA elements of the genome but also the degradation of exogenous RNA of viral origin for instance. The miRNA pathway on the other side is a mean to specifically regulate the expression of target genes. The sequence is that of Endoribonuclease Dicer (DICER1) from Gallus gallus (Chicken).